The following is a 168-amino-acid chain: ATP synthase subunit b (168 aa).

Residues 9–29 form a helical membrane-spanning segment; that stretch reads SIPFGTIAYTLFIFLLLLVML.

It belongs to the ATPase B chain family. In terms of assembly, F-type ATPases have 2 components, F(1) - the catalytic core - and F(0) - the membrane proton channel. F(1) has five subunits: alpha(3), beta(3), gamma(1), delta(1), epsilon(1). F(0) has three main subunits: a(1), b(2) and c(10-14). The alpha and beta chains form an alternating ring which encloses part of the gamma chain. F(1) is attached to F(0) by a central stalk formed by the gamma and epsilon chains, while a peripheral stalk is formed by the delta and b chains.

It is found in the cell membrane. Its function is as follows. F(1)F(0) ATP synthase produces ATP from ADP in the presence of a proton or sodium gradient. F-type ATPases consist of two structural domains, F(1) containing the extramembraneous catalytic core and F(0) containing the membrane proton channel, linked together by a central stalk and a peripheral stalk. During catalysis, ATP synthesis in the catalytic domain of F(1) is coupled via a rotary mechanism of the central stalk subunits to proton translocation. In terms of biological role, component of the F(0) channel, it forms part of the peripheral stalk, linking F(1) to F(0). This is ATP synthase subunit b from Bacillus cereus (strain B4264).